Reading from the N-terminus, the 252-residue chain is dITP/XTP pyrophosphatase (252 aa).

7–12 serves as a coordination point for substrate; sequence THNEGK. Aspartate 74 serves as the catalytic Proton acceptor. Mg(2+) is bound at residue aspartate 74. Substrate contacts are provided by residues serine 75 and 193 to 196; that span reads FGYD. A disordered region spans residues 202 to 229; sequence DDQPAGRVSTEPDHEGEPLTSAEMTPAE. Substrate is bound by residues lysine 230 and 235–236; that span reads HR.

The protein belongs to the HAM1 NTPase family. As to quaternary structure, homodimer. It depends on Mg(2+) as a cofactor.

The enzyme catalyses XTP + H2O = XMP + diphosphate + H(+). It carries out the reaction dITP + H2O = dIMP + diphosphate + H(+). The catalysed reaction is ITP + H2O = IMP + diphosphate + H(+). Pyrophosphatase that catalyzes the hydrolysis of nucleoside triphosphates to their monophosphate derivatives, with a high preference for the non-canonical purine nucleotides XTP (xanthosine triphosphate), dITP (deoxyinosine triphosphate) and ITP. Seems to function as a house-cleaning enzyme that removes non-canonical purine nucleotides from the nucleotide pool, thus preventing their incorporation into DNA/RNA and avoiding chromosomal lesions. This chain is dITP/XTP pyrophosphatase, found in Bifidobacterium longum (strain NCC 2705).